Here is a 258-residue protein sequence, read N- to C-terminus: 5'-nucleotidase SurE (258 aa).

The a divalent metal cation site is built by Asp18, Asp19, Ser49, and Asn102.

Belongs to the SurE nucleotidase family. Requires a divalent metal cation as cofactor.

The protein resides in the cytoplasm. It catalyses the reaction a ribonucleoside 5'-phosphate + H2O = a ribonucleoside + phosphate. Nucleotidase that shows phosphatase activity on nucleoside 5'-monophosphates. The chain is 5'-nucleotidase SurE from Vibrio campbellii (strain ATCC BAA-1116).